We begin with the raw amino-acid sequence, 154 residues long: Ribonuclease H (154 aa).

The region spanning Met1–Leu142 is the RNase H type-1 domain. Asp10, Glu48, Asp70, and Asp134 together coordinate Mg(2+).

This sequence belongs to the RNase H family. Monomer. Requires Mg(2+) as cofactor.

It is found in the cytoplasm. It carries out the reaction Endonucleolytic cleavage to 5'-phosphomonoester.. Endonuclease that specifically degrades the RNA of RNA-DNA hybrids. In Tolumonas auensis (strain DSM 9187 / NBRC 110442 / TA 4), this protein is Ribonuclease H.